The primary structure comprises 575 residues: Proline--tRNA ligase (575 aa).

Belongs to the class-II aminoacyl-tRNA synthetase family. ProS type 1 subfamily. As to quaternary structure, homodimer.

It localises to the cytoplasm. It catalyses the reaction tRNA(Pro) + L-proline + ATP = L-prolyl-tRNA(Pro) + AMP + diphosphate. Its function is as follows. Catalyzes the attachment of proline to tRNA(Pro) in a two-step reaction: proline is first activated by ATP to form Pro-AMP and then transferred to the acceptor end of tRNA(Pro). As ProRS can inadvertently accommodate and process non-cognate amino acids such as alanine and cysteine, to avoid such errors it has two additional distinct editing activities against alanine. One activity is designated as 'pretransfer' editing and involves the tRNA(Pro)-independent hydrolysis of activated Ala-AMP. The other activity is designated 'posttransfer' editing and involves deacylation of mischarged Ala-tRNA(Pro). The misacylated Cys-tRNA(Pro) is not edited by ProRS. The polypeptide is Proline--tRNA ligase (Solidesulfovibrio magneticus (strain ATCC 700980 / DSM 13731 / RS-1) (Desulfovibrio magneticus)).